The following is a 699-amino-acid chain: Elongation factor G (699 aa).

One can recognise a tr-type G domain in the interval 8-283; the sequence is EHIRNIGICA…AVVDFLPSPI (276 aa). Residues 17–24, 81–85, and 135–138 contribute to the GTP site; these read AHIDAGKT, DTPGH, and NKMD.

This sequence belongs to the TRAFAC class translation factor GTPase superfamily. Classic translation factor GTPase family. EF-G/EF-2 subfamily.

It localises to the cytoplasm. In terms of biological role, catalyzes the GTP-dependent ribosomal translocation step during translation elongation. During this step, the ribosome changes from the pre-translocational (PRE) to the post-translocational (POST) state as the newly formed A-site-bound peptidyl-tRNA and P-site-bound deacylated tRNA move to the P and E sites, respectively. Catalyzes the coordinated movement of the two tRNA molecules, the mRNA and conformational changes in the ribosome. This is Elongation factor G from Rickettsia felis (strain ATCC VR-1525 / URRWXCal2) (Rickettsia azadi).